A 772-amino-acid polypeptide reads, in one-letter code: Endoplasmic reticulum membrane sensor NFE2L1 (772 aa).

Residues 7–24 form a helical; Signal-anchor for type II membrane protein membrane-spanning segment; sequence YLTEGLLQFTILLSLIGV. Positions 108–148 are disordered; the sequence is DPEGSVSGSQPNSGLALESSSGLQDVTGPDNGVRESETEQG. Positions 113 to 131 are enriched in polar residues; it reads VSGSQPNSGLALESSSGLQ. The cholesterol recognition/amino acid consensus (CRAC) region stretch occupies residues 191 to 199; sequence VFDYSHRQK. Asn348 and Asn360 each carry an N-linked (GlcNAc...) asparagine glycan. The segment at 379 to 383 is CPD; the sequence is SPEVE. Residues Asn412 and Asn423 are each glycosylated (N-linked (GlcNAc...) asparagine). Disordered regions lie at residues 470-532 and 582-613; these read EEEF…DSET and SALD…QMSR. Positions 476 to 480 match the Destruction motif motif; the sequence is DSGLS. The span at 476–523 shows a compositional bias: low complexity; the sequence is DSGLSLDSSHSPSSLSSSEGSSSSSSSSSSSSSSASSSASSSFSEEGA. The residue at position 528 (Ser528) is a Phosphoserine; by CK2. The segment covering 598 to 613 has biased composition (basic and acidic residues); the sequence is GSKEKQADFLDKQMSR. Ser599 bears the Phosphoserine; by PKA mark. In terms of domain architecture, bZIP spans 654-717; the sequence is LIRDIRRRGK…RQMKQKVQSL (64 aa). The segment at 656 to 675 is basic motif; sequence RDIRRRGKNKMAAQNCRKRK. Residues 682 to 696 form a leucine-zipper region; the sequence is LERDVEDLQRDKARL.

Belongs to the bZIP family. CNC subfamily. In terms of assembly, interacts with KEAP1. As to quaternary structure, interacts (via CPD region) with FBXW7; leading to its ubiquitination and degradation. Interacts with SYVN1/HRD1; leading to its ubiquitination and degradation. Interacts (when ubiquitinated) with DDI2; leading to its cleavage. Interacts (via the bZIP domain) with small MAF protein (MAFF, MAFG or MAFK); required for binding to antioxidant response elements (AREs) on DNA. Interacts (via Destruction motif) with BTRC; leading to its ubiquitination and degradation. Interacts with CEBPB; the heterodimer represses expression of DSPP during odontoblast differentiation. Interacts with MOTS-c, a peptide produced by the mitochondrially encoded 12S rRNA MT-RNR1. Cleaved at Leu-104 by the aspartyl protease DDI2 following retrotranslocation, releasing the protein from the endoplasmic reticulum membrane and forming the transcription factor NRF1 that translocates into the nucleus. Ubiquitination is prerequisite for cleavage by aspartyl protease DDI2. Post-translationally, N-glycosylated in normal conditions, when it has a single-pass type II membrane protein topology, with the DNA-binding domain facing the endoplasmic reticulum lumen. Deglycosylated during retrotranslocation to the cytosolic side of the membrane, to have a single-pass type III membrane protein topology with the major part of the protein facing the cytosol. In terms of processing, ubiquitinated by the SCF(FBXW7) complex and SYVN1/HRD1, leading to its degradation by the proteasome. Ubiquitinated during retrotranslocation to the cytosolic side of the membrane: ubiquitination does not lead to degradation and is required for processing by the aspartyl protease DDI2 and subsequent release from the endoplasmic reticulum membrane. Phosphorylation by CK2 at Ser-528 inhibits transcription factor activity, possibly by affecting DNA-binding activity. Phosphorylation at Ser-599 is required for interaction with CEBPB. Post-translationally, ubiquitinated by the SCF(BTRC) complex in the nucleus, leading to its degradation by the proteasome.

The protein localises to the endoplasmic reticulum membrane. It localises to the nucleus. Functionally, endoplasmic reticulum membrane sensor that translocates into the nucleus in response to various stresses to act as a transcription factor. Constitutes a precursor of the transcription factor NRF1. Able to detect various cellular stresses, such as cholesterol excess, oxidative stress or proteasome inhibition. In response to stress, it is released from the endoplasmic reticulum membrane following cleavage by the protease DDI2 and translocates into the nucleus to form the transcription factor NRF1. Acts as a key sensor of cholesterol excess: in excess cholesterol conditions, the endoplasmic reticulum membrane form of the protein directly binds cholesterol via its CRAC motif, preventing cleavage and release of the transcription factor NRF1, thereby allowing expression of genes promoting cholesterol removal, such as CD36. Involved in proteasome homeostasis: in response to proteasome inhibition, it is released from the endoplasmic reticulum membrane, translocates to the nucleus and activates expression of genes encoding proteasome subunits. Its function is as follows. CNC-type bZIP family transcription factor that translocates to the nucleus and regulates expression of target genes in response to various stresses. Heterodimerizes with small-Maf proteins (MAFF, MAFG or MAFK) and binds DNA motifs including the antioxidant response elements (AREs), which regulate expression of genes involved in oxidative stress response. Activates or represses expression of target genes, depending on the context. Plays a key role in cholesterol homeostasis by acting as a sensor of cholesterol excess: in low cholesterol conditions, translocates into the nucleus and represses expression of genes involved in defense against cholesterol excess, such as CD36. In excess cholesterol conditions, the endoplasmic reticulum membrane form of the protein directly binds cholesterol via its CRAC motif, preventing cleavage and release of the transcription factor NRF1, thereby allowing expression of genes promoting cholesterol removal. Critical for redox balance in response to oxidative stress: acts by binding the AREs motifs on promoters and mediating activation of oxidative stress response genes, such as GCLC, GCLM, GSS, MT1 and MT2. Plays an essential role during fetal liver hematopoiesis: probably has a protective function against oxidative stress and is involved in lipid homeostasis in the liver. Involved in proteasome homeostasis: in response to proteasome inhibition, mediates the 'bounce-back' of proteasome subunits by translocating into the nucleus and activating expression of genes encoding proteasome subunits. Also involved in regulating glucose flux. Together with CEBPB; represses expression of DSPP during odontoblast differentiation. In response to ascorbic acid induction, activates expression of SP7/Osterix in osteoblasts. The protein is Endoplasmic reticulum membrane sensor NFE2L1 (NFE2L1) of Homo sapiens (Human).